Consider the following 387-residue polypeptide: uncharacterized protein (387 aa).

The segment at 1–23 (MSSLPRNAVARNSKMHKKRDSGV) is disordered. Residues 98–129 (KIARDLKKRQEDYEKTKLEVERLKRSEELANK) are a coiled coil. Residues 146–255 (ENNTVEPNNE…NKKKKKEKNK (110 aa)) form a disordered region. 2 stretches are compositionally biased toward low complexity: residues 162–175 (EQITEQTVEQTTEQ) and 182–194 (EQTTEKTTQQTAE). Residues 204–213 (TVEKSGDQST) show a composition bias toward basic and acidic residues. Positions 214–231 (EKTTQQTAEESVEQSTEQ) are enriched in polar residues.

This is an uncharacterized protein from Acanthamoeba polyphaga mimivirus (APMV).